Reading from the N-terminus, the 335-residue chain is Nucleoid-associated protein PputW619_4243 (335 aa).

Belongs to the YejK family.

Its subcellular location is the cytoplasm. It localises to the nucleoid. The protein is Nucleoid-associated protein PputW619_4243 of Pseudomonas putida (strain W619).